A 238-amino-acid polypeptide reads, in one-letter code: Ribonuclease PH (238 aa).

Residues R86 and 124–126 (GTR) contribute to the phosphate site.

It belongs to the RNase PH family. In terms of assembly, homohexameric ring arranged as a trimer of dimers.

It carries out the reaction tRNA(n+1) + phosphate = tRNA(n) + a ribonucleoside 5'-diphosphate. Functionally, phosphorolytic 3'-5' exoribonuclease that plays an important role in tRNA 3'-end maturation. Removes nucleotide residues following the 3'-CCA terminus of tRNAs; can also add nucleotides to the ends of RNA molecules by using nucleoside diphosphates as substrates, but this may not be physiologically important. Probably plays a role in initiation of 16S rRNA degradation (leading to ribosome degradation) during starvation. This Pasteurella multocida (strain Pm70) protein is Ribonuclease PH.